A 196-amino-acid polypeptide reads, in one-letter code: Probable malonic semialdehyde reductase RutE (196 aa).

Belongs to the nitroreductase family. HadB/RutE subfamily. Requires FMN as cofactor.

It catalyses the reaction 3-hydroxypropanoate + NADP(+) = 3-oxopropanoate + NADPH + H(+). May reduce toxic product malonic semialdehyde to 3-hydroxypropionic acid, which is excreted. The chain is Probable malonic semialdehyde reductase RutE from Escherichia coli O7:K1 (strain IAI39 / ExPEC).